Consider the following 171-residue polypeptide: Large ribosomal subunit protein uL5 (171 aa).

Belongs to the universal ribosomal protein uL5 family. In terms of assembly, part of the 50S ribosomal subunit; contacts the 5S rRNA and probably tRNA. Forms a bridge to the 30S subunit in the 70S ribosome.

Its function is as follows. This is one of the proteins that bind and probably mediate the attachment of the 5S RNA into the large ribosomal subunit, where it forms part of the central protuberance. In the 70S ribosome it contacts protein S13 of the 30S subunit (bridge B1b), connecting the 2 subunits; this bridge is implicated in subunit movement. May contact the P site tRNA; the 5S rRNA and some of its associated proteins might help stabilize positioning of ribosome-bound tRNAs. The protein is Large ribosomal subunit protein uL5 of Methanocorpusculum labreanum (strain ATCC 43576 / DSM 4855 / Z).